The following is a 353-amino-acid chain: Putative glutamine synthetase (353 aa).

The region spanning 19-102 is the GS beta-grasp domain; the sequence is SIIEYVWIGG…VICDTYDVNG (84 aa). In terms of domain architecture, GS catalytic spans 109–353; sequence HRHNANIIFE…IILQTVCESD (245 aa).

This sequence belongs to the glutamine synthetase family.

It catalyses the reaction L-glutamate + NH4(+) + ATP = L-glutamine + ADP + phosphate + H(+). The protein is Putative glutamine synthetase of Acanthamoeba polyphaga (Amoeba).